Reading from the N-terminus, the 68-residue chain is Alpha-conotoxin-like Ca1.2 (68 aa).

The first 21 residues, 1 to 21, serve as a signal peptide directing secretion; the sequence is MGMRMMFTVFLLVVLATTVVS. Residues 22–48 constitute a propeptide that is removed on maturation; that stretch reads FTSDRASEGRNAAAKDKASDLVALTVR. Intrachain disulfides connect Cys50/Cys56 and Cys51/Cys64. Residues 52 to 54 form a lacks the Ser-Xaa-Pro motif that is crucial for potent interaction with nAChR region; the sequence is AIR. Position 63 is a sulfotyrosine (Tyr63). Cys64 carries the post-translational modification Cysteine amide. Positions 65–68 are excised as a propeptide; that stretch reads GGIY.

It belongs to the conotoxin A superfamily. Expressed by the venom duct.

It is found in the secreted. Alpha-conotoxins act on postsynaptic membranes, they bind to the nicotinic acetylcholine receptors (nAChR) and thus inhibit them. Has possibly a distinct nAChR binding mode from other alpha-conotoxins, due to a different three residue motif (lacks the Ser-Xaa-Pro motif). This is Alpha-conotoxin-like Ca1.2 from Conus caracteristicus (Characteristic cone).